Here is a 294-residue protein sequence, read N- to C-terminus: Ribosomal RNA small subunit methyltransferase H (294 aa).

Residues 31–33, D49, F76, D97, and Q104 contribute to the S-adenosyl-L-methionine site; that span reads GGY.

This sequence belongs to the methyltransferase superfamily. RsmH family.

The protein localises to the cytoplasm. It catalyses the reaction cytidine(1402) in 16S rRNA + S-adenosyl-L-methionine = N(4)-methylcytidine(1402) in 16S rRNA + S-adenosyl-L-homocysteine + H(+). Functionally, specifically methylates the N4 position of cytidine in position 1402 (C1402) of 16S rRNA. The chain is Ribosomal RNA small subunit methyltransferase H from Wolbachia pipientis subsp. Culex pipiens (strain wPip).